We begin with the raw amino-acid sequence, 148 residues long: Large ribosomal subunit protein bL9 (148 aa).

Belongs to the bacterial ribosomal protein bL9 family.

Functionally, binds to the 23S rRNA. In Pelotomaculum thermopropionicum (strain DSM 13744 / JCM 10971 / SI), this protein is Large ribosomal subunit protein bL9.